We begin with the raw amino-acid sequence, 440 residues long: MGPGSQRALFLLLLLLASPGARAFQSCLNKQQLLTTIRQLQQLLKGQETRFTEGIRNMKSRLAALQNTVNKMTPDAPPVSCPALEAPPDGKKFGSKYLVDHEVYFTCNPGFQLVGPSSVVCLANGSWTGEQPRCRDISECSSQPCHNGGTCVEGINHYRCICPPGKTGNRCQHQTQAAAPDGGEAGDPAFSRAPRCAQVEREQHCSCEAGFHLSSTTGGHSVCQDVNECEIYGQKGRPRLCMHACVNTPGSYRCTCPSGYRILADGKSCEDVDECAGPQHMCPRGTTCINTGGGFQCVNPECPEGSGNISYVKTSPFQCERNPCPMDSRPCRHLPKTISFHYLSLPSKLKTPITLFRMATASIPGHPGPNSLRFGIVGGNSRGHFVMQRSDRQTGELILTQTLEGPQTLEVDVDMSEYLERSFQANHVSKVTIFVSRYDF.

The signal sequence occupies residues 1–24 (MGPGSQRALFLLLLLLASPGARAF). Residues 28 to 73 (LNKQQLLTTIRQLQQLLKGQETRFTEGIRNMKSRLAALQNTVNKMT) adopt a coiled-coil conformation. One can recognise a Sushi domain in the interval 79-136 (VSCPALEAPPDGKKFGSKYLVDHEVYFTCNPGFQLVGPSSVVCLANGSWTGEQPRCRD). Cystine bridges form between Cys81/Cys121, Cys107/Cys134, Cys140/Cys151, Cys145/Cys160, Cys162/Cys171, Cys229/Cys245, Cys241/Cys254, Cys256/Cys269, Cys275/Cys288, Cys282/Cys297, and Cys302/Cys319. An N-linked (GlcNAc...) asparagine glycan is attached at Asn124. The region spanning 136–172 (DISECSSQPCHNGGTCVEGINHYRCICPPGKTGNRCQ) is the EGF-like 1; calcium-binding domain. The EGF-like 2; calcium-binding domain occupies 225–270 (DVNECEIYGQKGRPRLCMHACVNTPGSYRCTCPSGYRILADGKSCE). In terms of domain architecture, EGF-like 3; calcium-binding spans 271-320 (DVDECAGPQHMCPRGTTCINTGGGFQCVNPECPEGSGNISYVKTSPFQCE). N-linked (GlcNAc...) asparagine glycosylation occurs at Asn308.

It belongs to the fibulin family. Interacts with heparin, FBLN1, FN1 and DSPP. Preferentially binds dental mesenchyme cells and odontoblasts but not dental epithelial cells or nondental cells. Binding requires a heparan sulfate-containing receptor on the cell surface as well as an integrin. In terms of processing, N-glycosylated. In terms of tissue distribution, highly expressed in newborn incisors and molars. A weaker expression is seen in the brain, kidneys, muscles and bones.

It localises to the secreted. The protein localises to the extracellular space. Its subcellular location is the extracellular matrix. In terms of biological role, an adhesion molecule that interacts with extracellular matrix molecules in developing teeth and may play important roles in differentiation and maintenance of odontoblasts as well as in dentin formation. The sequence is that of Fibulin-7 (Fbln7) from Mus musculus (Mouse).